We begin with the raw amino-acid sequence, 457 residues long: Protein unc-93 homolog A (457 aa).

The next 5 membrane-spanning stretches (helical) occupy residues 8–28 (VLVLSFGFLLLFTAYGGLQSL), 42–62 (ALSTLYGGMLLSSMFLPPVLI), 65–85 (LGCKWTLVLAMCCYVAFSLGN), 86–106 (FYASWYTLIPASVLVGLGAAA), and 140–160 (IFFLIFQSSGVWGNLISSLVF). Residue Asn-190 is glycosylated (N-linked (GlcNAc...) asparagine). The next 6 membrane-spanning stretches (helical) occupy residues 202-222 (TLLGIYTGCGFLAVLLMAVFL), 257-277 (LRLLILLPMLSGFEQAFLSGD), 291-311 (FVGYVMICFGAADALCSVLFG), 320-340 (TVLFALGAVTQLACIIALLLW), 344-364 (PSQLPVFFVFPSLWGMADAVW), and 395-415 (FVIAFGYSTFLCVSVKLYVLL). The interval 438–457 (GPLAAGRTKPAEDGATQTKL) is disordered.

Belongs to the unc-93 family.

Its subcellular location is the cell membrane. The polypeptide is Protein unc-93 homolog A (UNC93A) (Bos taurus (Bovine)).